Reading from the N-terminus, the 277-residue chain is Undecaprenyl-diphosphatase (277 aa).

7 helical membrane passes run 3 to 23 (IVLLIKAAIMGLVEGLTEFLP), 43 to 63 (VGKVFDIAIQTGAIFAVILVY), 85 to 105 (LNVLIAFVPAVVLGLLFGKAI), 109 to 129 (LFTPVVVASTFIIGGFIILWA), 189 to 209 (TDFSFYLAIPTLIGAGVYSLF), 218 to 238 (ADLPTFAVGLVVSFFSAWLCI), and 249 to 269 (SFVGFAYYRIVFGVVVLATAW).

Belongs to the UppP family.

The protein resides in the cell inner membrane. It carries out the reaction di-trans,octa-cis-undecaprenyl diphosphate + H2O = di-trans,octa-cis-undecaprenyl phosphate + phosphate + H(+). Its function is as follows. Catalyzes the dephosphorylation of undecaprenyl diphosphate (UPP). Confers resistance to bacitracin. The protein is Undecaprenyl-diphosphatase of Albidiferax ferrireducens (strain ATCC BAA-621 / DSM 15236 / T118) (Rhodoferax ferrireducens).